The primary structure comprises 397 residues: Anhydro-N-acetylmuramic acid kinase (397 aa).

9 to 16 is an ATP binding site; it reads GTSYDAID.

Belongs to the anhydro-N-acetylmuramic acid kinase family.

The catalysed reaction is 1,6-anhydro-N-acetyl-beta-muramate + ATP + H2O = N-acetyl-D-muramate 6-phosphate + ADP + H(+). It participates in amino-sugar metabolism; 1,6-anhydro-N-acetylmuramate degradation. Its pathway is cell wall biogenesis; peptidoglycan recycling. In terms of biological role, catalyzes the specific phosphorylation of 1,6-anhydro-N-acetylmuramic acid (anhMurNAc) with the simultaneous cleavage of the 1,6-anhydro ring, generating MurNAc-6-P. Is required for the utilization of anhMurNAc either imported from the medium or derived from its own cell wall murein, and thus plays a role in cell wall recycling. The protein is Anhydro-N-acetylmuramic acid kinase of Rhodococcus erythropolis (strain PR4 / NBRC 100887).